The following is a 401-amino-acid chain: Glycerol-3-phosphate dehydrogenase [NAD(+)] 1 (401 aa).

NAD(+) contacts are provided by residues 40 to 45 (GSGNWG), phenylalanine 128, lysine 151, and alanine 184. Residue lysine 151 coordinates substrate. The active-site Proton acceptor is lysine 244. Arginine 309 and glutamine 338 together coordinate NAD(+). 309–310 (RN) lines the substrate pocket.

The protein belongs to the NAD-dependent glycerol-3-phosphate dehydrogenase family.

The protein resides in the cytoplasm. The enzyme catalyses sn-glycerol 3-phosphate + NAD(+) = dihydroxyacetone phosphate + NADH + H(+). In Zygosaccharomyces rouxii, this protein is Glycerol-3-phosphate dehydrogenase [NAD(+)] 1 (GPD1).